Reading from the N-terminus, the 1321-residue chain is Bile salt export pump (1321 aa).

Residues 1–62 (MSDSVILRSV…FSSSKDIWLM (62 aa)) lie on the Cytoplasmic side of the membrane. One can recognise an ABC transmembrane type-1 1 domain in the interval 62 to 385 (MLMGGVCALL…ASSCLEIFST (324 aa)). A helical membrane pass occupies residues 63–83 (LMGGVCALLHGMAQPGILIIF). Over 84-147 (GIMTDIFIKY…MIKFSGIYAG (64 aa)) the chain is Extracellular. Asparagine 109, asparagine 116, asparagine 122, and asparagine 125 each carry an N-linked (GlcNAc...) asparagine glycan. A helical membrane pass occupies residues 148–168 (VGMTVLILGYFQIRLWVITGA). Over 169-215 (RQIRRMRKIYFRRIMRMEIGWFDCTSVGELNSRFADDIEKINDAIAD) the chain is Cytoplasmic. The helical transmembrane segment at 216-236 (QLAHFLQRMSTAMCGLLLGFY) threads the bilayer. The Extracellular segment spans residues 237–240 (RGWK). A helical transmembrane segment spans residues 241 to 261 (LTLVILAVSPLIGIGAAVIGL). The Cytoplasmic segment spans residues 262–319 (SIAKFTELELKAYAKAGSIADEVLSSIRTVAAFGGENKEVERYEKNLVFAQRWGIWKG). The chain crosses the membrane as a helical span at residues 320-340 (MVMGFFTGYMWCLIFFCYALA). At 341–353 (FWYGSTLVLDEEE) the chain is on the extracellular side. Residues 354–374 (YTPGTLVQIFLCVILAAMNIG) traverse the membrane as a helical segment. Over 375–755 (HASSCLEIFS…KYNIPEWHYI (381 aa)) the chain is Cytoplasmic. Positions 420 to 656 (IEFHNVTFHY…KGVYFMLVTL (237 aa)) constitute an ABC transporter 1 domain. 455-462 (GSSGAGKS) provides a ligand contact to ATP. The residue at position 586 (threonine 586) is a Phosphothreonine. Position 587 is a phosphoserine (serine 587). The interval 651-674 (FMLVTLQSQGDNAHKETSIMGKDA) is interaction with HAX1. A phosphoserine mark is found at serine 692, serine 703, and serine 706. In terms of domain architecture, ABC transmembrane type-1 2 spans 755–1043 (ILVGSLSAAI…TFSYTPSYAK (289 aa)). Residues 756-776 (LVGSLSAAINGAVTPIYSLLF) traverse the membrane as a helical segment. Residues 777 to 794 (SQLLGTFSLLDKEQQRSE) lie on the Extracellular side of the membrane. The chain crosses the membrane as a helical span at residues 795-815 (IHSMCLFFVILGCVSIFTQFL). Residues 816 to 869 (QGYTFAKSGELLTKRLRKFGFKAMLGQDIGWFDDLRNNPGVLTTRLATDASQVQ) are Cytoplasmic-facing. Transmembrane regions (helical) follow at residues 870–890 (GATGSQVGMMVNSFTNIIAAL) and 891–911 (LIAFFFSWKLSLIITIFFPFL). The Cytoplasmic portion of the chain corresponds to 912 to 979 (ALSGAVQTKM…SYKTAVRKAN (68 aa)). The helical transmembrane segment at 980–1000 (IYGLCFAFSQGIAFLANSAAY) threads the bilayer. The Extracellular segment spans residues 1001-1011 (RYGGYLIAYEG). Residues 1012–1032 (LGFSHVFRVVSSVALSATAVG) traverse the membrane as a helical segment. The Cytoplasmic portion of the chain corresponds to 1033-1321 (RTFSYTPSYA…KLVITGAPIS (289 aa)). The ABC transporter 2 domain maps to 1078–1316 (IDFIDCKFTY…KGAYYKLVIT (239 aa)). 1113 to 1120 (GSSGCGKS) is an ATP binding site. Serine 1321 bears the Phosphoserine mark.

The protein belongs to the ABC transporter superfamily. ABCB family. Multidrug resistance exporter (TC 3.A.1.201) subfamily. As to quaternary structure, interacts with HAX1. Interacts with the adapter protein complex 2 (AP-2) throught AP2A2 or AP2A1; this interaction regulates cell membrane expression of ABCB11 through its internalization in a clathrin-dependent manner and its subsequent degradation. Ubiquitinated; short-chain ubiquitination regulates cell-Surface expression of ABCB11. In terms of processing, N-glycosylated. As to expression, expressed predominantly, if not exclusively in the liver, where it was further localized to the canalicular microvilli and to subcanalicular vesicles of the hepatocytes by in situ.

It localises to the apical cell membrane. The protein resides in the recycling endosome membrane. The protein localises to the endosome. It is found in the cell membrane. It catalyses the reaction cholate(in) + ATP + H2O = cholate(out) + ADP + phosphate + H(+). It carries out the reaction taurocholate(in) + ATP + H2O = taurocholate(out) + ADP + phosphate + H(+). The enzyme catalyses glycocholate(in) + ATP + H2O = glycocholate(out) + ADP + phosphate + H(+). The catalysed reaction is glycochenodeoxycholate(in) + ATP + H2O = glycochenodeoxycholate(out) + ADP + phosphate + H(+). It catalyses the reaction taurochenodeoxycholate(in) + ATP + H2O = taurochenodeoxycholate(out) + ADP + phosphate + H(+). It carries out the reaction glycoursodeoxycholate(in) + ATP + H2O = glycoursodeoxycholate(out) + ADP + phosphate + H(+). The enzyme catalyses tauroursodeoxycholate(in) + ATP + H2O = tauroursodeoxycholate(out) + ADP + phosphate + H(+). The catalysed reaction is taurodeoxycholate(in) + ATP + H2O = taurodeoxycholate(out) + ADP + phosphate + H(+). It catalyses the reaction pravastatin(in) + ATP + H2O = pravastatin(out) + ADP + phosphate + H(+). The uptake of taurocholate is inhibited by taurolithocholate sulfate with an IC(50) of 52.9 uM. Pravastatin competitively inhibits the transport of taurocholic acid. Cyclosporin A, glibenclamide, rifampicin and troglitazonestrongly competitively inhibit the transport activity of taurocholate. The canalicular transport activity of taurocholate is strongly dependent on canalicular membrane cholesterol content. The uptake of taurocholate is increased by short- and medium-chain fatty acids. Cholesterol increases transport capacity of taurocholate without affecting the affinity for the substrate. Catalyzes the transport of the major hydrophobic bile salts, such as taurine and glycine-conjugated cholic acid across the canalicular membrane of hepatocytes in an ATP-dependent manner, therefore participates in hepatic bile acid homeostasis and consequently to lipid homeostasis through regulation of biliary lipid secretion in a bile salts dependent manner. Transports taurine-conjugated bile salts more rapidly than glycine-conjugated bile salts. Also transports non-bile acid compounds, such as pravastatin and fexofenadine in an ATP-dependent manner and may be involved in their biliary excretion. This Rattus norvegicus (Rat) protein is Bile salt export pump.